We begin with the raw amino-acid sequence, 149 residues long: Arginine repressor (149 aa).

The protein belongs to the ArgR family.

The protein localises to the cytoplasm. It participates in amino-acid biosynthesis; L-arginine biosynthesis [regulation]. Regulates arginine biosynthesis genes. The polypeptide is Arginine repressor (Alkaliphilus metalliredigens (strain QYMF)).